The following is a 90-amino-acid chain: Small ribosomal subunit protein bS16 (90 aa).

It belongs to the bacterial ribosomal protein bS16 family.

The protein is Small ribosomal subunit protein bS16 of Geobacillus kaustophilus (strain HTA426).